We begin with the raw amino-acid sequence, 248 residues long: 2,3-bisphosphoglycerate-dependent phosphoglycerate mutase (248 aa).

Substrate contacts are provided by residues 8-15, 21-22, arginine 60, 87-90, lysine 98, 114-115, and 183-184; these read RHGESEWN, TG, ERHY, RR, and GN. Histidine 9 functions as the Tele-phosphohistidine intermediate in the catalytic mechanism. Glutamate 87 functions as the Proton donor/acceptor in the catalytic mechanism.

This sequence belongs to the phosphoglycerate mutase family. BPG-dependent PGAM subfamily.

The enzyme catalyses (2R)-2-phosphoglycerate = (2R)-3-phosphoglycerate. Its pathway is carbohydrate degradation; glycolysis; pyruvate from D-glyceraldehyde 3-phosphate: step 3/5. In terms of biological role, catalyzes the interconversion of 2-phosphoglycerate and 3-phosphoglycerate. This Coprothermobacter proteolyticus (strain ATCC 35245 / DSM 5265 / OCM 4 / BT) protein is 2,3-bisphosphoglycerate-dependent phosphoglycerate mutase.